A 520-amino-acid polypeptide reads, in one-letter code: Serine protease Hip1 (520 aa).

The N-terminal stretch at methionine 1 to glycine 30 is a signal peptide. Residue cysteine 31 is the site of N-palmitoyl cysteine attachment. Residue cysteine 31 is the site of S-diacylglycerol cysteine attachment. Residues glycine 102–aspartate 497 form the AB hydrolase-1 domain. Residue serine 228 is the Nucleophile of the active site. Residue aspartate 463 is part of the active site. Residue histidine 490 is the Proton donor of the active site.

This sequence belongs to the peptidase S33 family.

The protein localises to the cell envelope. The protein resides in the cell membrane. Its function is as follows. Serine protease that promotes pathogenesis by promoting the processing and the extracellular release of the M.bovis heat-shock protein GroEL2. Key immunomodulatory virulence factor, which promotes survival in host macrophages and modulates host immune responses. This is Serine protease Hip1 from Mycobacterium bovis (strain ATCC BAA-935 / AF2122/97).